A 135-amino-acid chain; its full sequence is ATP synthase epsilon chain (135 aa).

Belongs to the ATPase epsilon chain family. In terms of assembly, F-type ATPases have 2 components, CF(1) - the catalytic core - and CF(0) - the membrane proton channel. CF(1) has five subunits: alpha(3), beta(3), gamma(1), delta(1), epsilon(1). CF(0) has three main subunits: a, b and c.

The protein resides in the cell inner membrane. Its function is as follows. Produces ATP from ADP in the presence of a proton gradient across the membrane. The polypeptide is ATP synthase epsilon chain (Rhodopseudomonas palustris (strain BisB5)).